The sequence spans 504 residues: Hydroxyisobutyraldehyde dehydrogenase (504 aa).

The Proton acceptor role is filled by Glu-260. The active-site Nucleophile is the Cys-294.

The protein belongs to the aldehyde dehydrogenase family.

The protein resides in the cytoplasm. It carries out the reaction 2-hydroxy-2-methylpropanal + NAD(+) + H2O = 2-hydroxy-2-methylpropanoate + NADH + 2 H(+). Its function is as follows. Involved in the degradation of methyl tert-butyl ether (MTBE). Catalyzes the conversion of hydroxyisobutyraldehyde to hydroxyisobutyric acid (HIBA). This Mycolicibacterium austroafricanum (Mycobacterium austroafricanum) protein is Hydroxyisobutyraldehyde dehydrogenase.